The sequence spans 287 residues: Anthocyanidin 3-O-glucosyltransferase 7 (287 aa).

UDP-alpha-D-glucose is bound by residues A162, Q164, H179, W182, N183, S184, and E187. G202 serves as a coordination point for an anthocyanidin. Residues D203 and Q204 each coordinate UDP-alpha-D-glucose.

The protein belongs to the UDP-glycosyltransferase family. In terms of tissue distribution, expressed in cotyledons, hypocotyls, roots and leaves.

The catalysed reaction is an anthocyanidin + UDP-alpha-D-glucose + H(+) = an anthocyanidin 3-O-beta-D-glucoside + UDP. It functions in the pathway pigment biosynthesis; anthocyanin biosynthesis. Functionally, in the presence of other necessary color factors, this glycosylation reaction allows the accumulation of anthocyanin pigments. The sequence is that of Anthocyanidin 3-O-glucosyltransferase 7 (GT7) from Manihot esculenta (Cassava).